The following is a 359-amino-acid chain: Protein Wnt-5b (359 aa).

The signal sequence occupies residues Met1–Ala17. A disulfide bond links Cys83 and Cys94. 2 N-linked (GlcNAc...) asparagine glycosylation sites follow: Asn93 and Asn99. Intrachain disulfides connect Cys133–Cys141, Cys143–Cys161, Cys217–Cys231, Cys219–Cys226, Cys288–Cys319, Cys304–Cys314, Cys318–Cys358, Cys334–Cys349, Cys336–Cys346, and Cys341–Cys342. Residue Ser223 is the site of O-palmitoleoyl serine; by PORCN attachment. Asn291 and Asn305 each carry an N-linked (GlcNAc...) asparagine glycan.

It belongs to the Wnt family. As to quaternary structure, interacts with PORCN. Palmitoleoylation is required for efficient binding to frizzled receptors. Depalmitoleoylation leads to Wnt signaling pathway inhibition.

The protein resides in the secreted. Its subcellular location is the extracellular space. The protein localises to the extracellular matrix. Its function is as follows. Ligand for members of the frizzled family of seven transmembrane receptors. Probable developmental protein. May be a signaling molecule which affects the development of discrete regions of tissues. Is likely to signal over only few cell diameters. This chain is Protein Wnt-5b (Wnt5b), found in Mus musculus (Mouse).